The primary structure comprises 91 residues: Chaperone protein gp12 (91 aa).

It belongs to the skunalikevirus chaperone protein gp12 family. Homohexamer. Further self-assembles as a spiral.

Functionally, probable chaperone for the tape measure protein. Might help to maintain the tape measure protein in solution during tail assembly. This is Chaperone protein gp12 from Lactococcus phage p2 (Lactococcus lactis bacteriophage p2).